Consider the following 421-residue polypeptide: Phosphatidylinositol 5-phosphate 4-kinase type-2 gamma (421 aa).

Ala2 carries the N-acetylalanine modification. At Ser26 the chain carries Phosphoserine. The PIPK domain occupies 43-420 (AADPLVGVFL…RFLDFIANIF (378 aa)). A required for interaction with PIP5K1A region spans residues 69-75 (VMLLPDD). A Phosphoserine modification is found at Ser349.

As to quaternary structure, interacts with PIP5K1A; the interaction inhibits PIP5K1A kinase activity. Post-translationally, phosphorylated, phosphorylation is induced by EGF.

The protein resides in the endoplasmic reticulum. The protein localises to the cytoplasm. It catalyses the reaction a 1,2-diacyl-sn-glycero-3-phospho-(1D-myo-inositol-5-phosphate) + ATP = a 1,2-diacyl-sn-glycero-3-phospho-(1D-myo-inositol-4,5-bisphosphate) + ADP + H(+). It carries out the reaction 1,2-dihexadecanoyl-sn-glycero-3-phospho-(1D-myo-inositol-5-phosphate) + ATP = 1,2-dihexadecanoyl-sn-glycero-3-phospho-(1D-myo-inositol-4,5-bisphosphate) + ADP + H(+). The catalysed reaction is 1,2-dihexadecanoyl-sn-glycero-3-phospho-(1D-myo-inositol-5-phosphate) + GTP = 1,2-dihexadecanoyl-sn-glycero-3-phospho-(1D-myo-inositol-4,5-bisphosphate) + GDP + H(+). Its function is as follows. Phosphatidylinositol 5-phosphate 4-kinase with low enzymatic activity. May be a GTP sensor, has higher GTP-dependent kinase activity than ATP-dependent kinase activity. PIP4Ks negatively regulate insulin signaling through a catalytic-independent mechanism. They interact with PIP5Ks and suppress PIP5K-mediated PtdIns(4,5)P2 synthesis and insulin-dependent conversion to PtdIns(3,4,5)P3. The protein is Phosphatidylinositol 5-phosphate 4-kinase type-2 gamma of Mus musculus (Mouse).